The following is a 335-amino-acid chain: Probable cytosolic iron-sulfur protein assembly protein Ciao1 (335 aa).

7 WD repeats span residues 12–51, 57–96, 101–140, 146–185, 192–231, 250–289, and 301–335; these read GHKG…WSTK, GHKR…FECN, GHEN…EFEC, SHTQ…NDWD, SHTS…NSAG, QHSR…KPDE, and AHDQ…KVTE.

Belongs to the WD repeat CIA1 family.

In terms of biological role, essential component of the cytosolic iron-sulfur (Fe/S) protein assembly machinery. Required for the maturation of extramitochondrial Fe/S proteins. The sequence is that of Probable cytosolic iron-sulfur protein assembly protein Ciao1 from Drosophila yakuba (Fruit fly).